The chain runs to 1469 residues: snRNA-activating protein complex subunit 4 (1469 aa).

Residues glutamate 16–aspartate 82 are disordered. Over residues glycine 24–serine 36 the composition is skewed to low complexity. Residues leucine 37–proline 53 are compositionally biased toward acidic residues. Phosphoserine is present on serine 68. The tract at residues glutamate 84–glycine 133 is SNAPC5-binding. A Myb-like 1 domain is found at glutamate 250–glutamate 288. Residues histidine 289–alanine 343 enclose the HTH myb-type 1 domain. Residues tryptophan 317–asparagine 341 constitute a DNA-binding region (H-T-H motif). The Myb-like 2 domain maps to leucine 344–leucine 395. 2 consecutive HTH myb-type domains span residues aspartate 396 to leucine 451 and lysine 452 to glutamine 503. 2 consecutive DNA-binding regions (H-T-H motif) follow at residues tryptophan 424 to leucine 447 and tryptophan 476 to methionine 499. 8 disordered regions span residues lysine 501–alanine 558, glutamine 577–glutamate 661, arginine 685–serine 710, alanine 834–serine 894, proline 932–leucine 981, proline 1001–threonine 1051, alanine 1121–alanine 1167, and isoleucine 1184–lysine 1266. The segment covering glutamine 503 to valine 516 has biased composition (basic residues). Residues serine 519–serine 541 are compositionally biased toward low complexity. Serine 599 carries the phosphoserine modification. Positions lysine 602–alanine 618 are enriched in polar residues. Phosphoserine is present on serine 626. The segment covering proline 932–glycine 944 has biased composition (pro residues). The segment covering proline 951–serine 968 has biased composition (low complexity). The span at isoleucine 1014–proline 1029 shows a compositional bias: polar residues. A compositionally biased stretch (pro residues) spans glutamate 1039 to threonine 1051. The residue at position 1157 (threonine 1157) is a Phosphothreonine. Basic and acidic residues predominate over residues isoleucine 1184 to proline 1195. The residue at position 1224 (serine 1224) is a Phosphoserine. The segment at alanine 1281 to proline 1393 is SNAPC2-binding. A phosphoserine mark is found at serine 1398, serine 1400, and serine 1440. Positions alanine 1430 to aspartate 1449 are disordered. Positions cysteine 1436–serine 1445 are enriched in polar residues.

As to quaternary structure, part of the SNAPc complex composed of 5 subunits: SNAPC1, SNAPC2, SNAPC3, SNAPC4 and SNAPC5. SNAPC4 interacts with SNAPC1, SNAPC2, SNAPC5, BRF2 and TBP.

Its subcellular location is the nucleus. Part of the SNAPc complex required for the transcription of both RNA polymerase II and III small-nuclear RNA genes. Binds to the proximal sequence element (PSE), a non-TATA-box basal promoter element common to these 2 types of genes. Recruits TBP and BRF2 to the U6 snRNA TATA box. This is snRNA-activating protein complex subunit 4 from Homo sapiens (Human).